The chain runs to 141 residues: Pancreatic progenitor cell differentiation and proliferation factor-like protein (141 aa).

The disordered stretch occupies residues 72–141 (DQSACGGNGP…GAPKDTNSPQ (70 aa)). A compositionally biased stretch (low complexity) spans 95-105 (SLLQQEESQLL). Positions 112 to 122 (GTVNRFRNSQT) are enriched in polar residues.

It belongs to the PPDPF family.

In Bos taurus (Bovine), this protein is Pancreatic progenitor cell differentiation and proliferation factor-like protein.